The sequence spans 446 residues: Histidine--tRNA ligase (446 aa).

It belongs to the class-II aminoacyl-tRNA synthetase family. As to quaternary structure, homodimer.

The protein localises to the cytoplasm. The enzyme catalyses tRNA(His) + L-histidine + ATP = L-histidyl-tRNA(His) + AMP + diphosphate + H(+). This chain is Histidine--tRNA ligase, found in Paraburkholderia phytofirmans (strain DSM 17436 / LMG 22146 / PsJN) (Burkholderia phytofirmans).